Consider the following 393-residue polypeptide: 4-O-methyl-glucuronoyl methylesterase (393 aa).

Residues 1-19 (MKLSAALLAIAAFANVASA) form the signal peptide. A Pyrrolidone carboxylic acid modification is found at Gln-20. Cys-22 and Cys-56 form a disulfide bridge. N-linked (GlcNAc...) asparagine glycans are attached at residues Asn-103 and Asn-168. The short motif at 203 to 208 (GCSRNG) is the GXSYXG catalytic site motif element. 2 disulfide bridges follow: Cys-204/Cys-340 and Cys-236/Cys-312. The Nucleophile role is filled by Ser-205. Substrate contacts are provided by Lys-209, Gln-251, Glu-259, and Trp-303. Residue His-339 is the Proton donor/acceptor of the active site.

Belongs to the carbohydrate esterase 15 (CE15) family.

The protein localises to the secreted. The enzyme catalyses a 4-O-methyl-alpha-D-glucuronosyl ester derivative + H2O = 4-O-methyl-alpha-D-glucuronate derivative + an alcohol + H(+). Its function is as follows. Glucuronoyl esterase which may play a significant role in biomass degradation, as it is considered to disconnect hemicellulose from lignin through the hydrolysis of the ester bond between 4-O-methyl-D-glucuronic acid residues of glucuronoxylans and aromatic alcohols of lignin. In Schizophyllum commune (strain H4-8 / FGSC 9210) (Split gill fungus), this protein is 4-O-methyl-glucuronoyl methylesterase.